Reading from the N-terminus, the 56-residue chain is Small ribosomal subunit protein uS14 (56 aa).

Zn(2+) contacts are provided by Cys21, Cys24, Cys39, and Cys42.

It belongs to the universal ribosomal protein uS14 family. As to quaternary structure, component of the 40S small ribosomal subunit. Requires Zn(2+) as cofactor.

The protein resides in the cytoplasm. It localises to the cytosol. It is found in the rough endoplasmic reticulum. This chain is Small ribosomal subunit protein uS14 (RpS29), found in Culex quinquefasciatus (Southern house mosquito).